The chain runs to 309 residues: Metal ABC transporter substrate-binding lipoprotein SsaB (309 aa).

A signal peptide spans 1–19; that stretch reads MKKLGFLSLLLLAVCTLFA. The N-palmitoyl cysteine moiety is linked to residue cysteine 20. Residue cysteine 20 is the site of S-diacylglycerol cysteine attachment. A divalent metal cation-binding residues include histidine 67, histidine 139, glutamate 205, and aspartate 280.

The protein belongs to the bacterial solute-binding protein 9 family. Lipoprotein receptor antigen (Lrai) subfamily. Homodimer and homotrimer.

It localises to the cell membrane. In terms of biological role, part of an ATP-binding cassette (ABC) transport system involved in metal import. Binds a metal with high affinity and specificity and delivers it to the membrane permease for translocation into the cytoplasm. Also acts as an adhesin which is involved on adherence to extracellular matrix. It is an important factor in the pathogenesis and infection. May contribute to the formation and accumulation of dental plaque. This Streptococcus sanguinis protein is Metal ABC transporter substrate-binding lipoprotein SsaB (ssaB).